The sequence spans 553 residues: Glucose-6-phosphate isomerase (553 aa).

Glutamate 355 (proton donor) is an active-site residue. Active-site residues include histidine 386 and lysine 513.

Belongs to the GPI family.

It localises to the cytoplasm. The enzyme catalyses alpha-D-glucose 6-phosphate = beta-D-fructose 6-phosphate. It functions in the pathway carbohydrate biosynthesis; gluconeogenesis. Its pathway is carbohydrate degradation; glycolysis; D-glyceraldehyde 3-phosphate and glycerone phosphate from D-glucose: step 2/4. In terms of biological role, catalyzes the reversible isomerization of glucose-6-phosphate to fructose-6-phosphate. This chain is Glucose-6-phosphate isomerase, found in Baumannia cicadellinicola subsp. Homalodisca coagulata.